The sequence spans 446 residues: Na(+)-translocating NADH-quinone reductase subunit A (446 aa).

This sequence belongs to the NqrA family. In terms of assembly, composed of six subunits; NqrA, NqrB, NqrC, NqrD, NqrE and NqrF.

It catalyses the reaction a ubiquinone + n Na(+)(in) + NADH + H(+) = a ubiquinol + n Na(+)(out) + NAD(+). In terms of biological role, NQR complex catalyzes the reduction of ubiquinone-1 to ubiquinol by two successive reactions, coupled with the transport of Na(+) ions from the cytoplasm to the periplasm. NqrA to NqrE are probably involved in the second step, the conversion of ubisemiquinone to ubiquinol. The protein is Na(+)-translocating NADH-quinone reductase subunit A of Vibrio cholerae serotype O1 (strain ATCC 39541 / Classical Ogawa 395 / O395).